Here is a 264-residue protein sequence, read N- to C-terminus: Thymidylate synthase (264 aa).

Arg21 is a dUMP binding site. His51 serves as a coordination point for (6R)-5,10-methylene-5,6,7,8-tetrahydrofolate. 126-127 (RR) serves as a coordination point for dUMP. Catalysis depends on Cys146, which acts as the Nucleophile. Residues 166-169 (RSVD), Asn177, and 207-209 (HLY) contribute to the dUMP site. Asp169 serves as a coordination point for (6R)-5,10-methylene-5,6,7,8-tetrahydrofolate. Residue Ala263 participates in (6R)-5,10-methylene-5,6,7,8-tetrahydrofolate binding.

It belongs to the thymidylate synthase family. Bacterial-type ThyA subfamily. Homodimer.

It localises to the cytoplasm. The catalysed reaction is dUMP + (6R)-5,10-methylene-5,6,7,8-tetrahydrofolate = 7,8-dihydrofolate + dTMP. The protein operates within pyrimidine metabolism; dTTP biosynthesis. In terms of biological role, catalyzes the reductive methylation of 2'-deoxyuridine-5'-monophosphate (dUMP) to 2'-deoxythymidine-5'-monophosphate (dTMP) while utilizing 5,10-methylenetetrahydrofolate (mTHF) as the methyl donor and reductant in the reaction, yielding dihydrofolate (DHF) as a by-product. This enzymatic reaction provides an intracellular de novo source of dTMP, an essential precursor for DNA biosynthesis. The polypeptide is Thymidylate synthase (Geobacillus sp. (strain WCH70)).